We begin with the raw amino-acid sequence, 2059 residues long: Large tegument protein deneddylase (2059 aa).

Residues 1–230 (MRIIAGSTNQ…PDIALSLNDF (230 aa)) are deubiquitination activity. Residues 3 to 220 (IIAGSTNQND…TILILKTYKD (218 aa)) enclose the Peptidase C76 domain. Active-site residues include Cys-23, Asp-155, and His-157. The segment at 245 to 272 (TNTLISKQSPSKRKQEKTSLNSNSLEKK) is disordered. A region of interest (interaction with inner tegument protein) is located at residue Ser-278.

The protein belongs to the herpesviridae large tegument protein family. As to quaternary structure, interacts with host CUL1 and CUL4A; these interactions inhibit the E3 ligase activity of cullins. Interacts with inner tegument protein. Interacts with capsid vertex specific component CVC2. Interacts with the major capsid protein/MCP.

It localises to the virion tegument. Its subcellular location is the host cytoplasm. The protein localises to the host nucleus. The catalysed reaction is Thiol-dependent hydrolysis of ester, thioester, amide, peptide and isopeptide bonds formed by the C-terminal Gly of ubiquitin (a 76-residue protein attached to proteins as an intracellular targeting signal).. Functionally, large tegument protein that plays multiple roles in the viral cycle. During viral entry, remains associated with the capsid while most of the tegument is detached and participates in the capsid transport toward the host nucleus. Plays a role in the routing of the capsid at the nuclear pore complex and subsequent uncoating. Within the host nucleus, acts as a deneddylase and promotes the degradation of nuclear CRLs (cullin-RING ubiquitin ligases) and thereby stabilizes nuclear CRL substrates, while cytoplasmic CRLs remain unaffected. These modifications prevent host cell cycle S-phase progression and create a favorable environment allowing efficient viral genome replication. Participates later in the secondary envelopment of capsids. Indeed, plays a linker role for the association of the outer viral tegument to the capsids together with the inner tegument protein. This Human herpesvirus 7 (strain JI) (HHV-7) protein is Large tegument protein deneddylase (U31).